Reading from the N-terminus, the 356-residue chain is GTPase Obg (356 aa).

Residues 1–159 (MKFLDQAKVY…RWIWLRLKLI (159 aa)) enclose the Obg domain. Residues 160-328 (ADAGLVGLPN…ALYAIAQHLG (169 aa)) enclose the OBG-type G domain. Residues 166–173 (GLPNAGKS), 191–195 (FTTLH), 213–216 (DIPG), 280–283 (NKID), and 309–311 (SGV) contribute to the GTP site. The Mg(2+) site is built by Ser-173 and Thr-193. Residues 333–356 (DIPLPKPSNADEEDPDTDQPWSPV) form a disordered region.

It belongs to the TRAFAC class OBG-HflX-like GTPase superfamily. OBG GTPase family. Monomer. Requires Mg(2+) as cofactor.

It is found in the cytoplasm. In terms of biological role, an essential GTPase which binds GTP, GDP and possibly (p)ppGpp with moderate affinity, with high nucleotide exchange rates and a fairly low GTP hydrolysis rate. Plays a role in control of the cell cycle, stress response, ribosome biogenesis and in those bacteria that undergo differentiation, in morphogenesis control. The sequence is that of GTPase Obg from Hyphomonas neptunium (strain ATCC 15444).